The following is a 335-amino-acid chain: Holliday junction branch migration complex subunit RuvB (335 aa).

Positions 4 to 183 are large ATPase domain (RuvB-L); sequence ADNLNVTSII…FGIVQRLEFY (180 aa). Residues Arg23, Gly64, Lys67, Thr68, Thr69, 130–132, Arg173, Tyr183, and Arg220 each bind ATP; that span reads EDY. Residue Thr68 participates in Mg(2+) binding. Residues 184–254 form a small ATPAse domain (RuvB-S) region; that stretch reads PTKDLQNIIS…VAMNALNMLN (71 aa). The head domain (RuvB-H) stretch occupies residues 257–335; it reads TAGFNFMDRQ…HFSLKQSRDI (79 aa). DNA-binding residues include Arg293, Arg312, and Arg317.

The protein belongs to the RuvB family. In terms of assembly, homohexamer. Forms an RuvA(8)-RuvB(12)-Holliday junction (HJ) complex. HJ DNA is sandwiched between 2 RuvA tetramers; dsDNA enters through RuvA and exits via RuvB. An RuvB hexamer assembles on each DNA strand where it exits the tetramer. Each RuvB hexamer is contacted by two RuvA subunits (via domain III) on 2 adjacent RuvB subunits; this complex drives branch migration. In the full resolvosome a probable DNA-RuvA(4)-RuvB(12)-RuvC(2) complex forms which resolves the HJ.

Its subcellular location is the cytoplasm. The catalysed reaction is ATP + H2O = ADP + phosphate + H(+). Functionally, the RuvA-RuvB-RuvC complex processes Holliday junction (HJ) DNA during genetic recombination and DNA repair, while the RuvA-RuvB complex plays an important role in the rescue of blocked DNA replication forks via replication fork reversal (RFR). RuvA specifically binds to HJ cruciform DNA, conferring on it an open structure. The RuvB hexamer acts as an ATP-dependent pump, pulling dsDNA into and through the RuvAB complex. RuvB forms 2 homohexamers on either side of HJ DNA bound by 1 or 2 RuvA tetramers; 4 subunits per hexamer contact DNA at a time. Coordinated motions by a converter formed by DNA-disengaged RuvB subunits stimulates ATP hydrolysis and nucleotide exchange. Immobilization of the converter enables RuvB to convert the ATP-contained energy into a lever motion, pulling 2 nucleotides of DNA out of the RuvA tetramer per ATP hydrolyzed, thus driving DNA branch migration. The RuvB motors rotate together with the DNA substrate, which together with the progressing nucleotide cycle form the mechanistic basis for DNA recombination by continuous HJ branch migration. Branch migration allows RuvC to scan DNA until it finds its consensus sequence, where it cleaves and resolves cruciform DNA. The polypeptide is Holliday junction branch migration complex subunit RuvB (Baumannia cicadellinicola subsp. Homalodisca coagulata).